The primary structure comprises 147 residues: Small ribosomal subunit protein uS12 (147 aa).

It belongs to the universal ribosomal protein uS12 family. In terms of assembly, part of the 30S ribosomal subunit.

With S4 and S5 plays an important role in translational accuracy. Located at the interface of the 30S and 50S subunits. The chain is Small ribosomal subunit protein uS12 from Methanococcus maripaludis (strain C7 / ATCC BAA-1331).